Reading from the N-terminus, the 471-residue chain is UDP-N-acetylmuramate--L-alanine ligase (471 aa).

112–118 contacts ATP; that stretch reads GTHGKTT.

It belongs to the MurCDEF family.

Its subcellular location is the cytoplasm. The enzyme catalyses UDP-N-acetyl-alpha-D-muramate + L-alanine + ATP = UDP-N-acetyl-alpha-D-muramoyl-L-alanine + ADP + phosphate + H(+). Its pathway is cell wall biogenesis; peptidoglycan biosynthesis. Its function is as follows. Cell wall formation. The protein is UDP-N-acetylmuramate--L-alanine ligase of Aromatoleum aromaticum (strain DSM 19018 / LMG 30748 / EbN1) (Azoarcus sp. (strain EbN1)).